Here is a 175-residue protein sequence, read N- to C-terminus: Transcriptional repressor NrdR (175 aa).

The segment at 3–32 is a zinc-finger region; that stretch reads CPYCSHPDSKVIDSRDVDDGVRRRRECVVC. In terms of domain architecture, ATP-cone spans 47-137; that stretch reads LFVVKKDQRR…VYREFTDITQ (91 aa).

It belongs to the NrdR family. Requires Zn(2+) as cofactor.

In terms of biological role, negatively regulates transcription of bacterial ribonucleotide reductase nrd genes and operons by binding to NrdR-boxes. This Dehalococcoides mccartyi (strain ATCC BAA-2100 / JCM 16839 / KCTC 5957 / BAV1) protein is Transcriptional repressor NrdR.